The primary structure comprises 558 residues: Phosphatase and actin regulator 3 (558 aa).

Polar residues predominate over residues Met1–Leu11. Disordered regions lie at residues Met1–Thr69, Lys81–Pro288, and Leu300–Met366. Residues Gln18–Asp33 show a composition bias toward low complexity. Thr69 is subject to Phosphothreonine. An RPEL 1 repeat occupies Ser92–Glu117. The span at Leu94–Ile108 shows a compositional bias: basic and acidic residues. Residues Glu144–Leu169 show a composition bias toward polar residues. The span at Pro228–Lys239 shows a compositional bias: pro residues. Ser229 bears the Phosphoserine mark. Thr235 carries the post-translational modification Phosphothreonine. Composition is skewed to basic and acidic residues over residues Leu300–Ala341 and Ala354–Glu363. RPEL repeat units follow at residues Glu400–Thr425, Met438–Asn463, and Gln476–Ser501. Positions Ala449–Arg485 form a coiled coil.

It belongs to the phosphatase and actin regulator family. In terms of assembly, binds PPP1CA and actin; thus inhibiting the protein phosphatase 1 (PP1) activity.

Its subcellular location is the nucleus matrix. This chain is Phosphatase and actin regulator 3 (Phactr3), found in Mus musculus (Mouse).